The sequence spans 173 residues: MNDLRYPIGQFTYKRPITEEMIDTWIQEIEDLPNELTKAIKDLDQKQLDTPYRVGGWTVRQVVHHVVDSHMNSYIRFKLALTEKNPTIKPYKEEKWAELPDSKLPVDVSLVMLESLHKRWVNLLYSLELEDLEKTFNHPDTGETKLAAAIGLYAWHGRHHTAHITSLRKRLNW.

Positions 65, 156, and 160 each coordinate Zn(2+).

Belongs to the metal hydrolase YfiT family. Homodimer. It depends on Zn(2+) as a cofactor.

The protein localises to the cytoplasm. In terms of biological role, possible metal-dependent hydrolase. This chain is Putative metal-dependent hydrolase BA_2700/GBAA_2700/BAS2515, found in Bacillus anthracis.